The chain runs to 651 residues: Zinc metalloproteinase nas-32 (651 aa).

A signal peptide spans 1-21 (MRRFFICYIGFLSIFLDFILA). A propeptide spanning residues 22-202 (DKDNNSEEER…EQSSKSRRKK (181 aa)) is cleaved from the precursor. N-linked (GlcNAc...) asparagine glycans are attached at residues asparagine 25, asparagine 72, and asparagine 251. One can recognise a Peptidase M12A domain in the interval 203–394 (RQIDNLAQFW…KMLNTHYSCS (192 aa)). Intrachain disulfides connect cysteine 245–cysteine 393, cysteine 264–cysteine 283, cysteine 395–cysteine 412, cysteine 415–cysteine 426, cysteine 434–cysteine 467, and cysteine 495–cysteine 516. A Zn(2+)-binding site is contributed by histidine 291. The active site involves glutamate 292. 2 residues coordinate Zn(2+): histidine 295 and histidine 301. Residues 380–433 (TFLDLKMLNTHYSCSCPTILSCGNGGFTNPANCSVCICPYGFGGALCTERTDYG) enclose the EGF-like domain. N-linked (GlcNAc...) asparagine glycosylation occurs at asparagine 411. Positions 434 to 554 (CGSTLTATDT…TTYTWSYRYV (121 aa)) constitute a CUB domain. Asparagine 453 is a glycosylation site (N-linked (GlcNAc...) asparagine). Residue asparagine 557 is glycosylated (N-linked (GlcNAc...) asparagine). Disulfide bonds link cysteine 610/cysteine 647, cysteine 619/cysteine 640, and cysteine 628/cysteine 644. In terms of domain architecture, ShKT spans 610-647 (CKDRFPKSQCSTYSTNGMCTQQPPLAAEFSCAETCGFC).

It depends on Zn(2+) as a cofactor. In terms of tissue distribution, expressed in pharyngeal, anal depressor, intestinal and vulva muscles, head neurons and head mesodermal cell.

It localises to the secreted. Metalloprotease. This Caenorhabditis elegans protein is Zinc metalloproteinase nas-32 (nas-32).